The sequence spans 74 residues: Small ribosomal subunit protein bS18 (74 aa).

It belongs to the bacterial ribosomal protein bS18 family. Part of the 30S ribosomal subunit. Forms a tight heterodimer with protein bS6.

In terms of biological role, binds as a heterodimer with protein bS6 to the central domain of the 16S rRNA, where it helps stabilize the platform of the 30S subunit. The polypeptide is Small ribosomal subunit protein bS18 (Natranaerobius thermophilus (strain ATCC BAA-1301 / DSM 18059 / JW/NM-WN-LF)).